The chain runs to 359 residues: Peptide chain release factor 1 (359 aa).

An N5-methylglutamine modification is found at Gln236.

Belongs to the prokaryotic/mitochondrial release factor family. Methylated by PrmC. Methylation increases the termination efficiency of RF1.

The protein localises to the cytoplasm. Its function is as follows. Peptide chain release factor 1 directs the termination of translation in response to the peptide chain termination codons UAG and UAA. The protein is Peptide chain release factor 1 of Streptococcus thermophilus (strain ATCC BAA-250 / LMG 18311).